Here is a 310-residue protein sequence, read N- to C-terminus: uncharacterized protein (310 aa).

Residues 1-6 are Cytoplasmic-facing; that stretch reads MISEKA. Residues 5 to 69 enclose the PQ-loop 1 domain; the sequence is KAATALATIA…SKGNVILQVQ (65 aa). Residues 7-27 traverse the membrane as a helical segment; it reads ATALATIATVCWCVQLIPQII. The Extracellular segment spans residues 28 to 36; the sequence is YNWKKKDCT. A helical membrane pass occupies residues 37-57; it reads GLPPLMMFLWVVSGIPFAIYF. Residues 58 to 61 lie on the Cytoplasmic side of the membrane; the sequence is CVSK. Residues 62–82 form a helical membrane-spanning segment; sequence GNVILQVQPHLFMFFCSISFV. The Extracellular segment spans residues 83 to 96; it reads QSCYYPPISMARSK. A helical transmembrane segment spans residues 97 to 117; it reads IVMIVAAIIAADVGMEVGFIL. Residues 118–131 lie on the Cytoplasmic side of the membrane; that stretch reads WLRPLYEKGVKWPD. The chain crosses the membrane as a helical span at residues 132-152; sequence LIFGISASVLLAVGLLPPYFE. The PQ-loop 2 domain occupies 138–194; the sequence is ASVLLAVGLLPPYFELAKRKGRVIGINFAFLFIDSLGAWLSIISVILGNMDIMGIIL. Residues 153–164 lie on the Extracellular side of the membrane; that stretch reads LAKRKGRVIGIN. A helical membrane pass occupies residues 165-185; it reads FAFLFIDSLGAWLSIISVILG. The Cytoplasmic portion of the chain corresponds to 186–191; the sequence is NMDIMG. Residues 192–212 traverse the membrane as a helical segment; the sequence is IILYSIVAGMELGIFASHFIW. At 213–310 the chain is on the extracellular side; the sequence is WCRFRFLAKG…DPDRYSRLSV (98 aa). Residue serine 229 is modified to Phosphoserine. Asparagine 251 and asparagine 259 each carry an N-linked (GlcNAc...) asparagine glycan.

It localises to the cell membrane. This is an uncharacterized protein from Saccharomyces cerevisiae (strain ATCC 204508 / S288c) (Baker's yeast).